The primary structure comprises 455 residues: Argininosuccinate lyase (455 aa).

This sequence belongs to the lyase 1 family. Argininosuccinate lyase subfamily.

Its subcellular location is the cytoplasm. The enzyme catalyses 2-(N(omega)-L-arginino)succinate = fumarate + L-arginine. It participates in amino-acid biosynthesis; L-arginine biosynthesis; L-arginine from L-ornithine and carbamoyl phosphate: step 3/3. In Shewanella baltica (strain OS195), this protein is Argininosuccinate lyase.